The following is a 105-amino-acid chain: dATP/dGTP diphosphohydrolase (105 aa).

Belongs to the Caudovirales dATP/dGTP diphosphohydrolase family. Co(2+) serves as cofactor.

The enzyme catalyses dGTP + H2O = dGMP + diphosphate + H(+). The catalysed reaction is dATP + H2O = dAMP + diphosphate + H(+). It functions in the pathway purine metabolism. In terms of biological role, catalyzes the hydrolysis of dGTP into dGMP, which is needed among other for the first step of biosynthesis of dZTP (2-amino-2'-deoxyadenosine-5'-triphosphate). In Cyanophage S-2L (Cyanobacteria phage S-2L), this protein is dATP/dGTP diphosphohydrolase.